Here is a 3620-residue protein sequence, read N- to C-terminus: Cubilin (3620 aa).

An N-terminal signal peptide occupies residues 1–20; it reads MSSPFLWSLIILLTFAESNG. A propeptide spans 21–32 (removed in mature form); it reads EAGGFELQRQKR. The interval 39–46 is interaction with AMN; the sequence is PRMATERG. N102 carries N-linked (GlcNAc...) asparagine glycosylation. The region spanning 129–165 is the EGF-like 1 domain; it reads DKKVCSSNPCQNGGTCLNLHDSFFCICPSQWKGPLCS. Intrachain disulfides connect C133–C144, C138–C153, C155–C164, C171–C187, C181–C196, and C198–C207. One can recognise an EGF-like 2; calcium-binding domain in the interval 167–208; it reads DVNECQIYSGTPLGCQNGATCENTAGSYSCLCSPETHGPQCA. An N-linked (GlcNAc...) asparagine glycan is attached at N253. Residues 260-301 enclose the EGF-like 3; calcium-binding domain; sequence DIDECNLQHAPCSPLVQCFNTQGSFYCGACPTGWQGNGYSCQ. Intrachain disulfides connect C264/C277, C271/C286, C289/C300, C306/C321, C313/C330, C333/C344, C350/C363, C357/C373, C396/C406, C401/C415, C417/C426, C433/C444, C438/C453, C455/C464, C471/C497, C524/C546, C587/C613, C640/C662, and C705/C730. An EGF-like 4; calcium-binding domain is found at 302 to 345; the sequence is DIDECKINNGGCSVVPPVMCVNTLGSYHCQACPPGYQGDGRVCT. 2 EGF-like domains span residues 346–382 and 392–427; these read VIDI…YTGN and LSDT…INCT. An N-linked (GlcNAc...) asparagine glycan is attached at N425. The 37-residue stretch at 429-465 folds into the EGF-like 7; calcium-binding domain; sequence NINECLSNPCFNGGTCVDGVNAFSCECTRFWTGFLCQ. 13 consecutive CUB domains span residues 471-583, 587-699, 705-812, 813-924, 928-1038, 1044-1158, 1162-1274, 1275-1386, 1388-1503, 1507-1616, 1617-1731, 1735-1847, and 1849-1960; these read CGGS…WETQ, CGGI…YLTS, CGGN…YQVA, CGGE…FSAA, CGEI…YEAT, CMED…WDGS, CGGN…YQQT, CRNV…WFIH, CGGE…WQAV, CGGI…FNQV, CGGH…YAAS, CGGT…FTKI, and GNDN…WFAV. Residues N708 and N745 are each glycosylated (N-linked (GlcNAc...) asparagine). Cysteines 757 and 775 form a disulfide. N777 carries N-linked (GlcNAc...) asparagine glycosylation. An intrachain disulfide couples C813 to C838. N853 carries N-linked (GlcNAc...) asparagine glycosylation. Cystine bridges form between C865–C887 and C928–C954. Residue N953 is glycosylated (N-linked (GlcNAc...) asparagine). E976 serves as a coordination point for Ca(2+). Residue N980 is glycosylated (N-linked (GlcNAc...) asparagine). C981 and C1001 are disulfide-bonded. Ca(2+)-binding residues include D984, D1023, D1025, and L1026. A disulfide bridge connects residues C1044 and C1070. Residues E1092, D1102, and D1143 each coordinate Ca(2+). C1099 and C1121 are joined by a disulfide. A disulfide bridge connects residues C1162 and C1188. A glycan (N-linked (GlcNAc...) asparagine) is linked at N1165. E1210 lines the Ca(2+) pocket. Residue N1214 is glycosylated (N-linked (GlcNAc...) asparagine). C1215 and C1237 are oxidised to a cystine. Residues D1218, D1259, and Q1262 each coordinate Ca(2+). C1275 and C1303 are joined by a disulfide. N-linked (GlcNAc...) asparagine glycosylation is found at N1304 and N1316. Position 1325 (E1325) interacts with Ca(2+). A glycan (N-linked (GlcNAc...) asparagine) is linked at N1329. A disulfide bridge connects residues C1330 and C1348. Residues D1333, D1370, and V1372 each coordinate Ca(2+). Disulfide bonds link C1388-C1414 and C1441-C1463. N1497 is a glycosylation site (N-linked (GlcNAc...) asparagine). Cysteines 1507 and 1533 form a disulfide. A glycan (N-linked (GlcNAc...) asparagine) is linked at N1548. 5 cysteine pairs are disulfide-bonded: C1560/C1578, C1617/C1644, C1672/C1694, C1735/C1761, and C1788/C1809. An N-linked (GlcNAc...) asparagine glycan is attached at N1643. 3 N-linked (GlcNAc...) asparagine glycosylation sites follow: N1799, N1816, and N1882. Cysteines 1902 and 1924 form a disulfide. N-linked (GlcNAc...) asparagine glycosylation occurs at N1961. 2 disulfides stabilise this stretch: C1975/C2003 and C2029/C2051. CUB domains follow at residues 1975–2088, 2089–2210, 2214–2331, 2333–2445, 2449–2562, 2567–2684, 2686–2798, 2802–2916, 2917–3032, 3034–3147, 3154–3271, 3275–3392, 3392–3504, and 3508–3620; these read CGGF…FHKS, CGGY…YEAK, CGGN…YAIA, CGGR…FESS, CGGE…YTSS, CGGS…YSFT, CGGI…WNTQ, CGGI…FVSR, CGGN…YKIT, CGGV…FQQT, CGGY…YTTV, CGGT…IAGC, CNRE…WTSS, and CGGT…TWDS. N-linked (GlcNAc...) asparagine glycosylation is found at N2082 and N2114. 3 cysteine pairs are disulfide-bonded: C2089-C2115, C2214-C2244, and C2272-C2294. N-linked (GlcNAc...) asparagine glycosylation is present at N2317. C2333 and C2360 form a disulfide bridge. 2 N-linked (GlcNAc...) asparagine glycosylation sites follow: N2383 and N2397. 3 cysteine pairs are disulfide-bonded: C2387–C2408, C2449–C2475, and C2502–C2524. 4 N-linked (GlcNAc...) asparagine glycosylation sites follow: N2528, N2578, N2589, and N2607. An intrachain disulfide couples C2567 to C2596. 7 disulfides stabilise this stretch: C2625–C2646, C2686–C2712, C2739–C2761, C2802–C2828, C2857–C2880, C2917–C2943, and C2974–C2996. A glycan (N-linked (GlcNAc...) asparagine) is linked at N2810. Residues N2920, N2942, and N2986 are each glycosylated (N-linked (GlcNAc...) asparagine). Residue T3005 is modified to Phosphothreonine. Intrachain disulfides connect C3034/C3061 and C3088/C3110. Residues N3039, N3100, and N3122 are each glycosylated (N-linked (GlcNAc...) asparagine). Disulfide bonds link C3154-C3182 and C3212-C3234. 3 N-linked (GlcNAc...) asparagine glycosylation sites follow: N3265, N3280, and N3292. 2 cysteine pairs are disulfide-bonded: C3275-C3303 and C3329-C3351. N3354 is a glycosylation site (N-linked (GlcNAc...) asparagine). A disulfide bridge connects residues C3392 and C3418. Residues N3427, N3454, and N3530 are each glycosylated (N-linked (GlcNAc...) asparagine). Intrachain disulfides connect C3445–C3467, C3508–C3534, and C3561–C3583.

Interacts with AMN. Component of the cubam complex composed of one CUBN trimer and one AMN chain. The cubam complex can dimerize. Interacts with LRP2 in a dual-receptor complex in a calcium-dependent manner. Found in a complex with PID1/PCLI1, LRP1 and CUBNI. Interacts with LRP1 and PID1/PCLI1. The precursor is cleaved by a trans-Golgi proteinase furin, removing a propeptide. Post-translationally, N-glycosylated. In terms of tissue distribution, detected in kidney cortex (at protein level). Detected in kidney, duodenum and jejunum.

It localises to the apical cell membrane. The protein localises to the cell membrane. Its subcellular location is the membrane. The protein resides in the coated pit. It is found in the endosome. It localises to the lysosome membrane. Endocytic receptor which plays a role in lipoprotein, vitamin and iron metabolism by facilitating their uptake. Acts together with LRP2 to mediate endocytosis of high-density lipoproteins, GC, hemoglobin, ALB, TF and SCGB1A1. Acts together with AMN to mediate endocytosis of the CBLIF-cobalamin complex. Binds to ALB, MB, Kappa and lambda-light chains, TF, hemoglobin, GC, SCGB1A1, APOA1, high density lipoprotein, and the CBLIF-cobalamin complex. Ligand binding requires calcium. Serves as important transporter in several absorptive epithelia, including intestine, renal proximal tubules and embryonic yolk sac. May play an important role in the development of the peri-implantation embryo through internalization of APOA1 and cholesterol. Binds to LGALS3 at the maternal-fetal interface. The sequence is that of Cubilin (CUBN) from Canis lupus familiaris (Dog).